Here is a 339-residue protein sequence, read N- to C-terminus: Ketol-acid reductoisomerase (NADP(+)) (339 aa).

A KARI N-terminal Rossmann domain is found at 1-182 (MRVYYDRDAD…GGGRAGIIET (182 aa)). NADP(+)-binding positions include 24-27 (YGSQ), R48, S51, S53, and 83-86 (DELQ). H108 is a catalytic residue. G134 provides a ligand contact to NADP(+). One can recognise a KARI C-terminal knotted domain in the interval 183-328 (TFKEECETDL…EKLREMMPWI (146 aa)). Mg(2+) contacts are provided by D191, E195, E227, and E231. A substrate-binding site is contributed by S252.

It belongs to the ketol-acid reductoisomerase family. Requires Mg(2+) as cofactor.

It catalyses the reaction (2R)-2,3-dihydroxy-3-methylbutanoate + NADP(+) = (2S)-2-acetolactate + NADPH + H(+). It carries out the reaction (2R,3R)-2,3-dihydroxy-3-methylpentanoate + NADP(+) = (S)-2-ethyl-2-hydroxy-3-oxobutanoate + NADPH + H(+). Its pathway is amino-acid biosynthesis; L-isoleucine biosynthesis; L-isoleucine from 2-oxobutanoate: step 2/4. It functions in the pathway amino-acid biosynthesis; L-valine biosynthesis; L-valine from pyruvate: step 2/4. Involved in the biosynthesis of branched-chain amino acids (BCAA). Catalyzes an alkyl-migration followed by a ketol-acid reduction of (S)-2-acetolactate (S2AL) to yield (R)-2,3-dihydroxy-isovalerate. In the isomerase reaction, S2AL is rearranged via a Mg-dependent methyl migration to produce 3-hydroxy-3-methyl-2-ketobutyrate (HMKB). In the reductase reaction, this 2-ketoacid undergoes a metal-dependent reduction by NADPH to yield (R)-2,3-dihydroxy-isovalerate. This chain is Ketol-acid reductoisomerase (NADP(+)), found in Azorhizobium caulinodans (strain ATCC 43989 / DSM 5975 / JCM 20966 / LMG 6465 / NBRC 14845 / NCIMB 13405 / ORS 571).